The chain runs to 215 residues: UPF0319 protein VV2_0960 (215 aa).

The first 21 residues, 1-21 (MNIIKPLTCILAMSISGLATA), serve as a signal peptide directing secretion.

Belongs to the UPF0319 family.

The chain is UPF0319 protein VV2_0960 from Vibrio vulnificus (strain CMCP6).